Reading from the N-terminus, the 855-residue chain is Suppressor of tumorigenicity 14 protein homolog (855 aa).

Over 1–55 (MGSNRGRKAGGGSQDFGAGLKYNSRLENMNGFEEGVEFLPANNAKKVEKRGPRRW) the chain is Cytoplasmic. At Ser-13 the chain carries Phosphoserine. The chain crosses the membrane as a helical; Signal-anchor for type II membrane protein span at residues 56-76 (VVLVAVLFSFLLLSLMAGLLV). The Extracellular portion of the chain corresponds to 77-855 (WHFHYRNVRV…RDWIKEHTGV (779 aa)). The 118-residue stretch at 86-203 (VQKVFNGHLR…TSVVAFPIDP (118 aa)) folds into the SEA domain. An N-linked (GlcNAc...) asparagine glycan is attached at Asn-107. A disulfide bridge links Cys-214 with Cys-244. 2 consecutive CUB domains span residues 214-331 (CSFA…EATF) and 340-444 (CGGF…LAEY). Asn-302 and Asn-365 each carry an N-linked (GlcNAc...) asparagine glycan. 2 disulfides stabilise this stretch: Cys-340–Cys-366 and Cys-397–Cys-410. N-linked (GlcNAc...) asparagine glycosylation occurs at Asn-421. LDL-receptor class A domains follow at residues 451-488 (DPCPGMFMCKTGRCIRKELRCDGWADCPDYSDERYCRC), 489-522 (NATHQFTCKNQFCKPLFWVCDSVNDCGDGSDEEG), 523-561 (CSCPAGSFKCSNGKCLPQSQKCNGKDNCGDGSDEASCDS), and 565-604 (VSCTKYTYRCQNGLCLSKGNPECDGKTDCSDGSDEKNCDC). 13 cysteine pairs are disulfide-bonded: Cys-453–Cys-464, Cys-459–Cys-477, Cys-471–Cys-486, Cys-488–Cys-501, Cys-496–Cys-514, Cys-508–Cys-523, Cys-525–Cys-537, Cys-532–Cys-550, Cys-544–Cys-559, Cys-567–Cys-579, Cys-574–Cys-593, Cys-587–Cys-602, and Cys-641–Cys-657. N-linked (GlcNAc...) asparagine glycosylation occurs at Asn-489. In terms of domain architecture, Peptidase S1 spans 615-854 (VVGGTNADEG…VRDWIKEHTG (240 aa)). Active-site charge relay system residues include His-656 and Asp-711. N-linked (GlcNAc...) asparagine glycosylation occurs at Asn-772. Disulfide bonds link Cys-776–Cys-790 and Cys-801–Cys-830. The Charge relay system role is filled by Ser-805.

Belongs to the peptidase S1 family. In terms of assembly, interacts with CDCP1. May interact with TMEFF1. Highly expressed in intestine, kidney, lung, and thymus. Not expressed in skeletal muscle, liver, heart, testis and brain.

It localises to the membrane. The enzyme catalyses Cleaves various synthetic substrates with Arg or Lys at the P1 position and prefers small side-chain amino acids, such as Ala and Gly, at the P2 position.. Its function is as follows. Exhibits trypsin-like activity as defined by cleavage of synthetic substrates with Arg or Lys as the P1 site. Involved in the terminal differentiation of keratinocytes through prostasin (PRSS8) activation and filaggrin (FLG) processing. Proteolytically cleaves and therefore activates TMPRSS13. The polypeptide is Suppressor of tumorigenicity 14 protein homolog (St14) (Mus musculus (Mouse)).